The sequence spans 173 residues: Crossover junction endodeoxyribonuclease RuvC (173 aa).

Catalysis depends on residues Asp8, Glu67, and Asp139. Positions 8, 67, and 139 each coordinate Mg(2+).

Belongs to the RuvC family. In terms of assembly, homodimer which binds Holliday junction (HJ) DNA. The HJ becomes 2-fold symmetrical on binding to RuvC with unstacked arms; it has a different conformation from HJ DNA in complex with RuvA. In the full resolvosome a probable DNA-RuvA(4)-RuvB(12)-RuvC(2) complex forms which resolves the HJ. Mg(2+) serves as cofactor.

The protein localises to the cytoplasm. It carries out the reaction Endonucleolytic cleavage at a junction such as a reciprocal single-stranded crossover between two homologous DNA duplexes (Holliday junction).. The RuvA-RuvB-RuvC complex processes Holliday junction (HJ) DNA during genetic recombination and DNA repair. Endonuclease that resolves HJ intermediates. Cleaves cruciform DNA by making single-stranded nicks across the HJ at symmetrical positions within the homologous arms, yielding a 5'-phosphate and a 3'-hydroxyl group; requires a central core of homology in the junction. The consensus cleavage sequence is 5'-(A/T)TT(C/G)-3'. Cleavage occurs on the 3'-side of the TT dinucleotide at the point of strand exchange. HJ branch migration catalyzed by RuvA-RuvB allows RuvC to scan DNA until it finds its consensus sequence, where it cleaves and resolves the cruciform DNA. This is Crossover junction endodeoxyribonuclease RuvC from Enterobacter sp. (strain 638).